Reading from the N-terminus, the 316-residue chain is 4-hydroxy-3-methylbut-2-enyl diphosphate reductase (316 aa).

Cysteine 12 contributes to the [4Fe-4S] cluster binding site. (2E)-4-hydroxy-3-methylbut-2-enyl diphosphate contacts are provided by histidine 43 and histidine 81. Residues histidine 43 and histidine 81 each contribute to the dimethylallyl diphosphate site. Residues histidine 43 and histidine 81 each contribute to the isopentenyl diphosphate site. A [4Fe-4S] cluster-binding site is contributed by cysteine 103. Histidine 131 contacts (2E)-4-hydroxy-3-methylbut-2-enyl diphosphate. Dimethylallyl diphosphate is bound at residue histidine 131. Residue histidine 131 coordinates isopentenyl diphosphate. Residue glutamate 133 is the Proton donor of the active site. Residue threonine 170 participates in (2E)-4-hydroxy-3-methylbut-2-enyl diphosphate binding. A [4Fe-4S] cluster-binding site is contributed by cysteine 198. Serine 226, asparagine 228, and serine 271 together coordinate (2E)-4-hydroxy-3-methylbut-2-enyl diphosphate. Positions 226, 228, and 271 each coordinate dimethylallyl diphosphate. Residues serine 226, asparagine 228, and serine 271 each coordinate isopentenyl diphosphate.

It belongs to the IspH family. [4Fe-4S] cluster is required as a cofactor.

The enzyme catalyses isopentenyl diphosphate + 2 oxidized [2Fe-2S]-[ferredoxin] + H2O = (2E)-4-hydroxy-3-methylbut-2-enyl diphosphate + 2 reduced [2Fe-2S]-[ferredoxin] + 2 H(+). It catalyses the reaction dimethylallyl diphosphate + 2 oxidized [2Fe-2S]-[ferredoxin] + H2O = (2E)-4-hydroxy-3-methylbut-2-enyl diphosphate + 2 reduced [2Fe-2S]-[ferredoxin] + 2 H(+). The protein operates within isoprenoid biosynthesis; dimethylallyl diphosphate biosynthesis; dimethylallyl diphosphate from (2E)-4-hydroxy-3-methylbutenyl diphosphate: step 1/1. It functions in the pathway isoprenoid biosynthesis; isopentenyl diphosphate biosynthesis via DXP pathway; isopentenyl diphosphate from 1-deoxy-D-xylulose 5-phosphate: step 6/6. Its function is as follows. Catalyzes the conversion of 1-hydroxy-2-methyl-2-(E)-butenyl 4-diphosphate (HMBPP) into a mixture of isopentenyl diphosphate (IPP) and dimethylallyl diphosphate (DMAPP). Acts in the terminal step of the DOXP/MEP pathway for isoprenoid precursor biosynthesis. This Bacillus cereus (strain B4264) protein is 4-hydroxy-3-methylbut-2-enyl diphosphate reductase.